The following is a 240-amino-acid chain: Ubiquinone biosynthesis O-methyltransferase (240 aa).

4 residues coordinate S-adenosyl-L-methionine: R44, G64, D85, and M129.

Belongs to the methyltransferase superfamily. UbiG/COQ3 family.

The catalysed reaction is a 3-demethylubiquinol + S-adenosyl-L-methionine = a ubiquinol + S-adenosyl-L-homocysteine + H(+). It catalyses the reaction a 3-(all-trans-polyprenyl)benzene-1,2-diol + S-adenosyl-L-methionine = a 2-methoxy-6-(all-trans-polyprenyl)phenol + S-adenosyl-L-homocysteine + H(+). The protein operates within cofactor biosynthesis; ubiquinone biosynthesis. O-methyltransferase that catalyzes the 2 O-methylation steps in the ubiquinone biosynthetic pathway. The sequence is that of Ubiquinone biosynthesis O-methyltransferase from Escherichia fergusonii (strain ATCC 35469 / DSM 13698 / CCUG 18766 / IAM 14443 / JCM 21226 / LMG 7866 / NBRC 102419 / NCTC 12128 / CDC 0568-73).